Reading from the N-terminus, the 420-residue chain is MTKWKRANPNGTRDYLFEECTLIEEVEQKLRRTFLERGYEEIRTPTIEFYDVFAFQSRPIDEEKMYKFFDEKGRIIVLRPDMTIPLARVVGTQRCDTPLKVTYSGNVFRANESLAGKYNEIVQSGIEVIGIDNVRAEIECVISVIQSLQKLKVQSFTIEIGQVQLYKCIVKKLSIHEEEEKVLRTYIESKNYAALSNFIRDKKLDRCDETVKLLEKLPRLFGNLEVIEEAEKLASSNEMKMAITRVKEIYEAIEKLGYGSYISIDLGMIQHLDYYTGVIFKGYIYEIGEEIVSGGRYDELIGNFGEMLPAVGLAVQVNQIVKALQEQQEPYERKRIDIMIHYELNRLAEAERLRNLLQKDGKKVALSLFSNLNDTFQFARKNQIVTVVEAKSESLVEYVWKEKWVVQKEGETSCVTFKLR.

This sequence belongs to the class-II aminoacyl-tRNA synthetase family. HisZ subfamily. As to quaternary structure, heteromultimer composed of HisG and HisZ subunits.

It localises to the cytoplasm. Its pathway is amino-acid biosynthesis; L-histidine biosynthesis; L-histidine from 5-phospho-alpha-D-ribose 1-diphosphate: step 1/9. Functionally, required for the first step of histidine biosynthesis. May allow the feedback regulation of ATP phosphoribosyltransferase activity by histidine. The sequence is that of ATP phosphoribosyltransferase regulatory subunit from Bacillus thuringiensis subsp. konkukian (strain 97-27).